The primary structure comprises 262 residues: Acyl-[acyl-carrier-protein]--UDP-N-acetylglucosamine O-acyltransferase (262 aa).

It belongs to the transferase hexapeptide repeat family. LpxA subfamily. As to quaternary structure, homotrimer.

It is found in the cytoplasm. The catalysed reaction is a (3R)-hydroxyacyl-[ACP] + UDP-N-acetyl-alpha-D-glucosamine = a UDP-3-O-[(3R)-3-hydroxyacyl]-N-acetyl-alpha-D-glucosamine + holo-[ACP]. The protein operates within glycolipid biosynthesis; lipid IV(A) biosynthesis; lipid IV(A) from (3R)-3-hydroxytetradecanoyl-[acyl-carrier-protein] and UDP-N-acetyl-alpha-D-glucosamine: step 1/6. In terms of biological role, involved in the biosynthesis of lipid A, a phosphorylated glycolipid that anchors the lipopolysaccharide to the outer membrane of the cell. The protein is Acyl-[acyl-carrier-protein]--UDP-N-acetylglucosamine O-acyltransferase of Verminephrobacter eiseniae (strain EF01-2).